Consider the following 245-residue polypeptide: tRNA (guanine-N(1)-)-methyltransferase (245 aa).

Residues G111 and M131–L136 contribute to the S-adenosyl-L-methionine site.

This sequence belongs to the RNA methyltransferase TrmD family. Homodimer.

It is found in the cytoplasm. It carries out the reaction guanosine(37) in tRNA + S-adenosyl-L-methionine = N(1)-methylguanosine(37) in tRNA + S-adenosyl-L-homocysteine + H(+). In terms of biological role, specifically methylates guanosine-37 in various tRNAs. The protein is tRNA (guanine-N(1)-)-methyltransferase of Staphylococcus epidermidis (strain ATCC 12228 / FDA PCI 1200).